The chain runs to 1475 residues: MASGAGGVGGGGGGKIRTRRCHQGPIKPYQQGRQQHQGILSRVTESVKNIVPGWLQRYFNKNEDVCSCSTDTSEVPRWPENKEDHLVYADEESSNITDGRITPEPAVSNTEEPSTTSTASNYPDVLTRPSLHRSHLNFSMLESPALHCQPSTSSAFPIGSSGFSLVKEIKDSTSQHDDDNISTTSGFSSRASDKDITVSKNTSLPPLWSPEAERSHSLSQHTATSSKKPAFNLSAFGTLSPSLGNSSILKTSQLGDSPFYPGKTTYGGAAAAVRQSKLRNTPYQAPVRRQMKAKQLSAQSYGVTSSTARRILQSLEKMSSPLADAKRIPSIVSSPLNSPLDRSGIDITDFQAKREKVDSQYPPVQRLMTPKPVSIATNRSVYFKPSLTPSGEFRKTNQRIDNKCSTGYEKNMTPGQNREQRESGFSYPNFSLPAANGLSSGVGGGGGKMRRERTRFVASKPLEEEEMEVPVLPKISLPITSSSLPTFNFSSPEITTSSPSPINSSQALTNKVQMTSPSSTGSPMFKFSSPIVKSTEANVLPPSSIGFTFSVPVAKTAELSGSSSTLEPIISSSAHHVTTVNSTNCKKTPPEDCEGPFRPAEILKEGSVLDILKSPGFASPKIDSVAAQPTATSPVVYTRPAISSFSSSGIGFGESLKAGSSWQCDTCLLQNKVTDNKCIACQAAKLSPRDTAKQTGIETPNKSGKTTLSASGTGFGDKFKPVIGTWDCDTCLVQNKPEAIKCVACETPKPGTCVKRALTLTVVSESAETMTASSSSCTVTTGTLGFGDKFKRPIGSWECSVCCVSNNAEDNKCVSCMSEKPGSSVPASSSSTVPVSLPSGGSLGLEKFKKPEGSWDCELCLVQNKADSTKCLACESAKPGTKSGFKGFDTSSSSSNSAASSSFKFGVSSSSSGPSQTLTSTGNFKFGDQGGFKIGVSSDSGSINPMSEGFKFSKPIGDFKFGVSSESKPEEVKKDSKNDNFKFGLSSGLSNPVSLTPFQFGVSNLGQEEKKEELPKSSSAGFSFGTGVINSTPAPANTIVTSENKSSFNLGTIETKSASVAPFTCKTSEAKKEEMPATKGGFSFGNVEPASLPSASVFVLGRTEEKQQEPVTSTSLVFGKKADNEEPKCQPVFSFGNSEQTKDENSSKSTFSFSMTKPSEKESEQPAKATFAFGAQTSTTADQGAAKPVFSFLNNSSSSSSTPATSAGGGIFGSSTSSSNPPVATFVFGQSSNPVSSSAFGNTAESSTSQSLLFSQDSKLATTSSTGTAVTPFVFGPGASSNNTTTSGFGFGATTTSSSAGSSFVFGTGPSAPSASPAFGANQTPTFGQSQGASQPNPPGFGSISSSTALFPTGSQPAPPTFGTVSSSSQPPVFGQQPSQSAFGSGTTPNSSSAFQFGSSTTNFNFTNNSPSGVFTFGANSSTPAASAQPSGSGGFPFNQSPAAFTVGSNGKNVFSSSGTSFSGRKIKTAVRRRK.

The segment covering 1–15 has biased composition (gly residues); sequence MASGAGGVGGGGGGK. Disordered stretches follow at residues 1 to 37, 90 to 124, and 171 to 225; these read MASG…QQHQ, DEES…NYPD, and DSTS…TATS. The residue at position 2 (Ala2) is an N-acetylalanine. Thr102 carries the phosphothreonine modification. 2 stretches are compositionally biased toward polar residues: residues 107–121 and 181–190; these read VSNT…TASN and ISTTSGFSSR. Phosphoserine is present on residues Ser182, Ser185, Ser192, Ser203, and Ser209. The stretch at 236–237 is repeat 1; sequence FG. The interval 236-1418 is 29 X 2 AA repeats of F-G; that stretch reads FGTLSPSLGN…NSPSGVFTFG (1183 aa). Phosphoserine occurs at positions 240, 257, 297, 320, 330, 333, 334, 338, and 343. Residue Lys353 forms a Glycyl lysine isopeptide (Lys-Gly) (interchain with G-Cter in SUMO2) linkage. Thr369 is subject to Phosphothreonine. N6-acetyllysine is present on Lys384. Phosphothreonine is present on Thr388. Ser500, Ser516, Ser518, Ser522, and Ser529 each carry phosphoserine. Residues Ser534 and Ser544 are each glycosylated (O-linked (GlcNAc) serine). Residue Thr588 is modified to Phosphothreonine. Ser607, Ser614, Ser619, and Ser633 each carry phosphoserine. Residues 652-653 form repeat 2; sequence FG. A RanBP2-type 1 zinc finger spans residues 657-687; sequence KAGSSWQCDTCLLQNKVTDNKCIACQAAKLS. Zn(2+) contacts are provided by Cys664, Cys667, Cys678, and Cys681. Position 687 is a phosphoserine (Ser687). Repeat unit 3 spans residues 715–716; it reads FG. The residue at position 718 (Lys718) is an N6-acetyllysine. The RanBP2-type 2 zinc finger occupies 722 to 751; sequence VIGTWDCDTCLVQNKPEAIKCVACETPKPG. Zn(2+) is bound by residues Cys728, Cys731, Cys742, and Cys745. Residues 786-787 form repeat 4; the sequence is FG. RanBP2-type zinc fingers lie at residues 793-822 and 851-880; these read PIGS…EKPG and PEGS…AKPG. Zn(2+) contacts are provided by Cys799, Cys802, Cys813, Cys816, Cys857, Cys860, Cys871, and Cys874. The residue at position 891 (Ser891) is a Phosphoserine. Repeat 5 spans residues 905-906; the sequence is FG. Ser908 and Ser909 each carry an O-linked (GlcNAc) serine glycan. Repeat 6 spans residues 926-927; sequence FG. The residue at position 954 (Lys954) is an N6-acetyllysine. 5 repeat units span residues 961-962, 983-984, 1000-1001, 1024-1025, and 1084-1085. A glycan (O-linked (GlcNAc) serine) is linked at Ser1113. Repeat copies occupy residues 1118 to 1119 and 1135 to 1136. Residues 1128–1167 are disordered; the sequence is KCQPVFSFGNSEQTKDENSSKSTFSFSMTKPSEKESEQPA. Residues 1147–1157 are compositionally biased toward low complexity; sequence SKSTFSFSMTK. Residue Thr1156 is glycosylated (O-linked (GlcNAc) threonine). Tandem repeats lie at residues 1173–1174, 1212–1213, 1228–1229, 1240–1241, 1275–1276, 1289–1290, 1291–1292, 1306–1307, 1319–1320, 1327–1328, and 1341–1342. The disordered stretch occupies residues 1311 to 1402; the sequence is SAPSASPAFG…SAFQFGSSTT (92 aa). Residues 1321 to 1335 show a composition bias toward polar residues; it reads ANQTPTFGQSQGASQ. Polar residues-rich tracts occupy residues 1343 to 1356 and 1363 to 1396; these read SISS…TGSQ and GTVS…SAFQ. The interval 1350-1475 is (Microbial infection) Interacts with HIV-1 capsid protein p24 (CA); the sequence is LFPTGSQPAP…KIKTAVRRRK (126 aa). Repeat copies occupy residues 1362 to 1363, 1374 to 1375, 1383 to 1384, 1397 to 1398, and 1417 to 1418. 2 stretches are compositionally biased toward polar residues: residues 1420–1431 and 1438–1463; these read NSSTPAASAQPS and FNQS…TSFS. The segment at 1420–1475 is disordered; it reads NSSTPAASAQPSGSGGFPFNQSPAAFTVGSNGKNVFSSSGTSFSGRKIKTAVRRRK. Residues Ser1457, Ser1461, and Ser1463 each carry the phosphoserine modification. Residues 1465 to 1475 are compositionally biased toward basic residues; the sequence is RKIKTAVRRRK.

The protein belongs to the NUP153 family. Part of the nuclear pore complex (NPC). Interacts with TPR (via coiled coil region); the interaction is direct and provides a link between the core structure and the TPR-containing nuclear basket of the nuclear pore complex (NPC). Interacts with HIKESHI. Interacts with SENP2. Interacts with XPO5. Interacts with RAN; the interaction occurs in a GTP- and GDP-independent manner. Interacts with MCM3AP isoform GANP; this interaction is required for GANP localization at the nuclear pore complex. Interacts with MAPK1. As to quaternary structure, (Microbial infection) Interacts (via C-terminus) with HIV-1 capsid protein p24 (CA) (via N-terminus). In terms of assembly, (Microbial infection) Interacts with HIV-1 integrase; this interaction might play a role in nuclear import of HIV pre-integration complex. (Microbial infection) Interacts with hepatitis B virus capsid protein; this interaction probably plays a role in nuclear import of HBV genome. As to quaternary structure, (Microbial infection) Interacts with Epstein-barr virus BGLF4; this interaction allows BGLF4 nuclear entry. In terms of assembly, (Microbial infection) Interacts with HIV-2 virus protein vpx; this interaction might promote vpx nuclear entry. It depends on Zn(2+) as a cofactor. In terms of processing, phosphorylated in interphase, hyperphosphorylated during mitosis. May play a role in the reversible disassembly of the nuclear pore complex during mitosis. Proteolytically degraded after poliovirus (PV) infection; degradation is partial and NCP- and TPR-binding domains withstand degradation. Post-translationally, O-glycosylated during cytokinesis at sites identical or close to phosphorylation sites, this interferes with the phosphorylation status.

It localises to the nucleus. The protein resides in the nucleus membrane. Its subcellular location is the nuclear pore complex. Functionally, component of the nuclear pore complex (NPC), a complex required for the trafficking across the nuclear envelope. Functions as a scaffolding element in the nuclear phase of the NPC essential for normal nucleocytoplasmic transport of proteins and mRNAs. Involved in the quality control and retention of unspliced mRNAs in the nucleus; in association with TPR, regulates the nuclear export of unspliced mRNA species bearing constitutive transport element (CTE) in a NXF1- and KHDRBS1-independent manner. Mediates TPR anchoring to the nuclear membrane at NPC. The repeat-containing domain may be involved in anchoring other components of the NPC to the pore membrane. Possible DNA-binding subunit of the nuclear pore complex (NPC). (Microbial infection) Interacts with HIV-1 caspid protein P24 and thereby promotes the integration of the virus in the nucleus of non-dividing cells (in vitro). In terms of biological role, (Microbial infection) Binds HIV-2 protein vpx and thereby promotes the nuclear translocation of the lentiviral genome (in vitro). The chain is Nuclear pore complex protein Nup153 (NUP153) from Homo sapiens (Human).